The primary structure comprises 207 residues: Thiamine-phosphate synthase (207 aa).

4-amino-2-methyl-5-(diphosphooxymethyl)pyrimidine contacts are provided by residues 36-40 (QMRIK) and Asp68. Mg(2+) contacts are provided by Asp69 and Asp88. 4-amino-2-methyl-5-(diphosphooxymethyl)pyrimidine is bound at residue Ser106. 132–134 (TKT) is a binding site for 2-[(2R,5Z)-2-carboxy-4-methylthiazol-5(2H)-ylidene]ethyl phosphate. Lys135 contributes to the 4-amino-2-methyl-5-(diphosphooxymethyl)pyrimidine binding site. Residues Gly162 and 182 to 183 (IS) contribute to the 2-[(2R,5Z)-2-carboxy-4-methylthiazol-5(2H)-ylidene]ethyl phosphate site.

This sequence belongs to the thiamine-phosphate synthase family. It depends on Mg(2+) as a cofactor.

It catalyses the reaction 2-[(2R,5Z)-2-carboxy-4-methylthiazol-5(2H)-ylidene]ethyl phosphate + 4-amino-2-methyl-5-(diphosphooxymethyl)pyrimidine + 2 H(+) = thiamine phosphate + CO2 + diphosphate. The enzyme catalyses 2-(2-carboxy-4-methylthiazol-5-yl)ethyl phosphate + 4-amino-2-methyl-5-(diphosphooxymethyl)pyrimidine + 2 H(+) = thiamine phosphate + CO2 + diphosphate. It carries out the reaction 4-methyl-5-(2-phosphooxyethyl)-thiazole + 4-amino-2-methyl-5-(diphosphooxymethyl)pyrimidine + H(+) = thiamine phosphate + diphosphate. It functions in the pathway cofactor biosynthesis; thiamine diphosphate biosynthesis; thiamine phosphate from 4-amino-2-methyl-5-diphosphomethylpyrimidine and 4-methyl-5-(2-phosphoethyl)-thiazole: step 1/1. Condenses 4-methyl-5-(beta-hydroxyethyl)thiazole monophosphate (THZ-P) and 2-methyl-4-amino-5-hydroxymethyl pyrimidine pyrophosphate (HMP-PP) to form thiamine monophosphate (TMP). In Pyrococcus furiosus (strain ATCC 43587 / DSM 3638 / JCM 8422 / Vc1), this protein is Thiamine-phosphate synthase.